Here is a 132-residue protein sequence, read N- to C-terminus: Prefoldin subunit alpha (132 aa).

This sequence belongs to the prefoldin subunit alpha family. Heterohexamer of two alpha and four beta subunits.

The protein resides in the cytoplasm. Molecular chaperone capable of stabilizing a range of proteins. Seems to fulfill an ATP-independent, HSP70-like function in archaeal de novo protein folding. The polypeptide is Prefoldin subunit alpha (pfdA) (Pyrobaculum aerophilum (strain ATCC 51768 / DSM 7523 / JCM 9630 / CIP 104966 / NBRC 100827 / IM2)).